Reading from the N-terminus, the 309-residue chain is tRNA uridine(34) hydroxylase (309 aa).

The Rhodanese domain occupies 130 to 224; sequence SDPDTIVIDT…YLEEVPQEES (95 aa). Cys-184 acts as the Cysteine persulfide intermediate in catalysis.

This sequence belongs to the TrhO family.

The enzyme catalyses uridine(34) in tRNA + AH2 + O2 = 5-hydroxyuridine(34) in tRNA + A + H2O. Its function is as follows. Catalyzes oxygen-dependent 5-hydroxyuridine (ho5U) modification at position 34 in tRNAs. In Rhizobium leguminosarum bv. trifolii (strain WSM2304), this protein is tRNA uridine(34) hydroxylase.